The primary structure comprises 666 residues: Long-chain-fatty-acid--CoA ligase ACSBG2 (666 aa).

Residues T230 to K238, E418 to S423, D496, and R624 each bind ATP.

The protein belongs to the ATP-dependent AMP-binding enzyme family. Bubblegum subfamily. As to expression, testis-specific.

It is found in the cytoplasm. Its subcellular location is the membrane. The enzyme catalyses a long-chain fatty acid + ATP + CoA = a long-chain fatty acyl-CoA + AMP + diphosphate. It catalyses the reaction (5Z,8Z,11Z,14Z)-eicosatetraenoate + ATP + CoA = (5Z,8Z,11Z,14Z)-eicosatetraenoyl-CoA + AMP + diphosphate. It carries out the reaction hexadecanoate + ATP + CoA = hexadecanoyl-CoA + AMP + diphosphate. The catalysed reaction is (9Z)-octadecenoate + ATP + CoA = (9Z)-octadecenoyl-CoA + AMP + diphosphate. The enzyme catalyses (9Z,12Z)-octadecadienoate + ATP + CoA = (9Z,12Z)-octadecadienoyl-CoA + AMP + diphosphate. It catalyses the reaction tetracosanoate + ATP + CoA = tetracosanoyl-CoA + AMP + diphosphate. In terms of biological role, catalyzes the conversion of fatty acids such as long chain and very long-chain fatty acids to their active form acyl-CoAs for both synthesis of cellular lipids, and degradation via beta-oxidation. Can activate diverse saturated, monosaturated and polyunsaturated fatty acids. Has increased ability to activate oleic and linoleic acid. May play a role in spermatogenesis. The sequence is that of Long-chain-fatty-acid--CoA ligase ACSBG2 from Homo sapiens (Human).